The primary structure comprises 437 residues: GTPase Der (437 aa).

EngA-type G domains are found at residues 3 to 167 (NLVA…NKET) and 176 to 352 (PRFA…ENRT). Residues 9 to 16 (GRPNVGKS), 56 to 60 (DTGGW), 119 to 122 (NKTD), 182 to 189 (GRPNAGKS), 229 to 233 (DTAGI), and 294 to 297 (NKWD) each bind GTP. The 85-residue stretch at 353 to 437 (TKIPTARLNE…TPINIYIRQK (85 aa)) folds into the KH-like domain.

The protein belongs to the TRAFAC class TrmE-Era-EngA-EngB-Septin-like GTPase superfamily. EngA (Der) GTPase family. Associates with the 50S ribosomal subunit.

Its function is as follows. GTPase that plays an essential role in the late steps of ribosome biogenesis. The protein is GTPase Der of Bacteroides thetaiotaomicron (strain ATCC 29148 / DSM 2079 / JCM 5827 / CCUG 10774 / NCTC 10582 / VPI-5482 / E50).